Consider the following 1433-residue polypeptide: DNA-directed RNA polymerase subunit beta' (1433 aa).

Cysteine 66, cysteine 68, cysteine 81, and cysteine 84 together coordinate Zn(2+). Mg(2+) contacts are provided by aspartate 473, aspartate 475, and aspartate 477. The Zn(2+) site is built by cysteine 815, cysteine 889, cysteine 896, and cysteine 899.

The protein belongs to the RNA polymerase beta' chain family. As to quaternary structure, the RNAP catalytic core consists of 2 alpha, 1 beta, 1 beta' and 1 omega subunit. When a sigma factor is associated with the core the holoenzyme is formed, which can initiate transcription. Mg(2+) serves as cofactor. The cofactor is Zn(2+).

It carries out the reaction RNA(n) + a ribonucleoside 5'-triphosphate = RNA(n+1) + diphosphate. Functionally, DNA-dependent RNA polymerase catalyzes the transcription of DNA into RNA using the four ribonucleoside triphosphates as substrates. The protein is DNA-directed RNA polymerase subunit beta' of Porphyromonas gingivalis (strain ATCC BAA-308 / W83).